A 242-amino-acid chain; its full sequence is UPF0246 protein SPP_1571 (242 aa).

It belongs to the UPF0246 family.

The protein is UPF0246 protein SPP_1571 of Streptococcus pneumoniae (strain P1031).